A 362-amino-acid chain; its full sequence is uncharacterized protein (362 aa).

Helical transmembrane passes span 32 to 52, 75 to 95, 106 to 126, 148 to 168, 176 to 196, 287 to 307, and 329 to 349; these read GAGW…VGAV, FVDA…ADGV, VVML…DLSV, AAVG…GVGA, GVGT…VVVV, VFAL…PVAM, and VLVA…CGMF.

This sequence belongs to the peptidase S58 family.

It is found in the cell membrane. Aminopeptidase. This is an uncharacterized protein from Mycobacterium leprae (strain TN).